The following is a 75-amino-acid chain: Translation initiation factor IF-1, chloroplastic (75 aa).

The protein belongs to the IF-1 family. Component of the 30S ribosomal translation pre-initiation complex which assembles on the 30S ribosome in the order IF-2 and IF-3, IF-1 and N-formylmethionyl-tRNA(fMet); mRNA recruitment can occur at any time during PIC assembly.

It localises to the plastid. The protein resides in the chloroplast. One of the essential components for the initiation of protein synthesis. Stabilizes the binding of IF-2 and IF-3 on the 30S subunit to which N-formylmethionyl-tRNA(fMet) subsequently binds. Helps modulate mRNA selection, yielding the 30S pre-initiation complex (PIC). Upon addition of the 50S ribosomal subunit IF-1, IF-2 and IF-3 are released leaving the mature 70S translation initiation complex. This chain is Translation initiation factor IF-1, chloroplastic (infA), found in Cucumis sativus (Cucumber).